Here is a 773-residue protein sequence, read N- to C-terminus: LON peptidase N-terminal domain and RING finger protein 1 (773 aa).

Residues 1 to 29 form a disordered region; it reads MSSPAVARTSPGGSREMAPAPQGRGRFWE. The stretch at 48–81 is one TPR 1 repeat; sequence WELLLRRGELLALGGHLKGALEAFAAALRRGAPA. The RING-type 1 zinc finger occupies 123–159; it reads CLGCRGFLSEPVTVPCGHSYCRRCLRRELRARCRLCR. TPR repeat units lie at residues 212–244, 246–278, and 279–312; these read ARAA…EPSD, IVKI…LPDW, and PEVY…DEDF. Polar residues predominate over residues 359 to 370; it reads EESQSLNEPSPK. The tract at residues 359–388 is disordered; sequence EESQSLNEPSPKQSEEIPEVTSEPVKGSLN. Position 431 is a phosphoserine (Ser-431). An RING-type 2 zinc finger spans residues 479–517; that stretch reads CSLCMRLFFEPVTTPCGHSFCKNCLERCLDHAPYCPLCK. In terms of domain architecture, Lon N-terminal spans 558-768; that stretch reads TAELSHLTKN…KIQHILTYFS (211 aa).

This chain is LON peptidase N-terminal domain and RING finger protein 1 (LONRF1), found in Homo sapiens (Human).